Consider the following 321-residue polypeptide: Fructose-1,6-bisphosphatase class 1 (321 aa).

E93, D114, L116, and D117 together coordinate Mg(2+). Substrate contacts are provided by residues 117–120 (DGSS), N205, Y233, and K263. E269 provides a ligand contact to Mg(2+).

Belongs to the FBPase class 1 family. Homotetramer. The cofactor is Mg(2+).

It is found in the cytoplasm. It catalyses the reaction beta-D-fructose 1,6-bisphosphate + H2O = beta-D-fructose 6-phosphate + phosphate. The protein operates within carbohydrate biosynthesis; gluconeogenesis. This Persephonella marina (strain DSM 14350 / EX-H1) protein is Fructose-1,6-bisphosphatase class 1.